The primary structure comprises 644 residues: Exoribonuclease 2 (644 aa).

Residues 189–516 (REDLTALDFV…NHRLLKAVIK (328 aa)) form the RNB domain. One can recognise an S1 motif domain in the interval 561-643 (DTRFAAEIVD…ETRSIIARPV (83 aa)).

Belongs to the RNR ribonuclease family. RNase II subfamily.

It localises to the cytoplasm. It carries out the reaction Exonucleolytic cleavage in the 3'- to 5'-direction to yield nucleoside 5'-phosphates.. Involved in mRNA degradation. Hydrolyzes single-stranded polyribonucleotides processively in the 3' to 5' direction. The chain is Exoribonuclease 2 from Escherichia coli O8 (strain IAI1).